Here is a 379-residue protein sequence, read N- to C-terminus: Diaminopimelate decarboxylase (379 aa).

K48 is modified (N6-(pyridoxal phosphate)lysine). Residues G214 and 242 to 245 (EPGR) each bind pyridoxal 5'-phosphate. 3 residues coordinate substrate: R245, R280, and Y284. The active-site Proton donor is the C309. Substrate-binding residues include E310 and Y338. Y338 contributes to the pyridoxal 5'-phosphate binding site.

It belongs to the Orn/Lys/Arg decarboxylase class-II family. LysA subfamily. Homodimer. Pyridoxal 5'-phosphate serves as cofactor.

It catalyses the reaction meso-2,6-diaminopimelate + H(+) = L-lysine + CO2. Its pathway is amino-acid biosynthesis; L-lysine biosynthesis via DAP pathway; L-lysine from DL-2,6-diaminopimelate: step 1/1. Functionally, specifically catalyzes the decarboxylation of meso-diaminopimelate (meso-DAP) to L-lysine. The protein is Diaminopimelate decarboxylase of Deinococcus radiodurans (strain ATCC 13939 / DSM 20539 / JCM 16871 / CCUG 27074 / LMG 4051 / NBRC 15346 / NCIMB 9279 / VKM B-1422 / R1).